Consider the following 238-residue polypeptide: Oil body-associated protein 1A (238 aa).

Belongs to the OBAP family. In terms of tissue distribution, expressed in seeds, but not in leaves or roots. Highest expression in scutellum. Detected in embryo axis and endosperm.

It is found in the lipid droplet. The polypeptide is Oil body-associated protein 1A (Zea mays (Maize)).